We begin with the raw amino-acid sequence, 64 residues long: Alpha-conotoxin-like Ai1.2 (64 aa).

Residues 1 to 17 (MFTVFLLVVLATTVVSS) form the signal peptide. Residues 18 to 43 (TSGRRAFRGRNAAAKASGLVGLTDRR) constitute a propeptide that is removed on maturation. 2 disulfides stabilise this stretch: Cys46/Cys52 and Cys47/Cys60. Residues 48 to 50 (SDP) form a ser-Xaa-Pro motif, crucial for potent interaction with nAChR region. Gly61 carries the post-translational modification Glycine amide.

The protein belongs to the conotoxin A superfamily. Expressed by the venom duct.

It localises to the secreted. Its function is as follows. Alpha-conotoxins act on postsynaptic membranes, they bind to the nicotinic acetylcholine receptors (nAChR) and thus inhibit them. The protein is Alpha-conotoxin-like Ai1.2 of Conus ammiralis (Admiral cone).